Consider the following 599-residue polypeptide: MLSLRRSIWIAACKRVSSFRTTIPIKSLHTNSQPVLSLRNVKFRPYSTIPLLQSLVPTCNSCGITLQKTDPDRPGFYREPGTGQKLVRKENLVASNAYNGLDDDDLKLLLNSSGEEKDISLFKQRNEPSPKVAPQSIQCIRCREAQFRSEYSQDEFPIESLDAIMTSLPPDAKLVYVISAADFPMSLDSRVFSYRSALEILFVITKCDLLFPTLNLANKYGLPFFQDYFYRKHGVSGENVVLTSGKIDWNIPTLLKNGKIRDNSYLIGSVNSGKSTLLKSMLSVSNKLAAKKQHLSSRERVKLEKEQDRLINSGASTPSDIRALRRKNEQEKNRTGPGASYMPGYTRGTIPYDVDGITMHDVPGFGENVDSNEFASLFSYLQPSQMKQLSKGVPIHKYGTYKSPFETIKGGQCYTVGGIFYMVPPPGTMVQARNCINHKAHIFSNVDKAKASLEAVANEDENGAHAGLRNVFIMPGSALKKLVPRYIPAFYGAIDLVVAGAGHVNLTPTGAPTPTDEPWIVWVPQGVRIWVRQPITRYITRTLAGRDAKGNPLRKELWKQKSVTHVERYTGKTPFYTRLSANPDNTMATKDNRYPAWYE.

The transit peptide at 1–46 (MLSLRRSIWIAACKRVSSFRTTIPIKSLHTNSQPVLSLRNVKFRPY) directs the protein to the mitochondrion. In terms of domain architecture, CP-type G spans 158–368 (IESLDAIMTS…MHDVPGFGEN (211 aa)). The tract at residues 312–342 (NSGASTPSDIRALRRKNEQEKNRTGPGASYM) is disordered. Residues 322 to 334 (RALRRKNEQEKNR) are compositionally biased toward basic and acidic residues.

Belongs to the TRAFAC class YlqF/YawG GTPase family. GEP3 subfamily.

It localises to the mitochondrion. Its function is as follows. May be involved in the mitochondrial lipid metabolism. This Meyerozyma guilliermondii (strain ATCC 6260 / CBS 566 / DSM 6381 / JCM 1539 / NBRC 10279 / NRRL Y-324) (Yeast) protein is Genetic interactor of prohibitins 3, mitochondrial (GEP3).